The sequence spans 289 residues: Glyoxylate/succinic semialdehyde reductase 1 (289 aa).

N-acetylmethionine is present on M1. NADP(+)-binding positions include G4–N18 and T95. K170 is a catalytic residue. NADP(+) is bound at residue K238.

It belongs to the HIBADH-related family. NP60 subfamily.

The protein localises to the cytoplasm. It localises to the cytosol. The catalysed reaction is glycolate + NADP(+) = glyoxylate + NADPH + H(+). It carries out the reaction 4-hydroxybutanoate + NADP(+) = succinate semialdehyde + NADPH + H(+). The ratio of NADPH/NADP(+) may regulate enzymatic activity. Its function is as follows. Catalyzes the NADPH-dependent reduction of glyoxylate to glycolate as well as succinic semialdehyde (SSA) to gamma-hydroxybutyrate in vitro. May function in redox homeostasis and play a role in oxidative stress tolerance by detoxifying glyoxylate and SSA generated in glycolate metabolism and GABA metabolism, respectively. The sequence is that of Glyoxylate/succinic semialdehyde reductase 1 (GLYR1) from Arabidopsis thaliana (Mouse-ear cress).